Consider the following 319-residue polypeptide: Olfactory receptor 8U3 (319 aa).

The Extracellular segment spans residues 1 to 25; sequence MAEVNISYVSEFILKGITDRPELQA. The N-linked (GlcNAc...) asparagine glycan is linked to N5. The chain crosses the membrane as a helical span at residues 26 to 46; the sequence is PCFVMFLTIYLVTVLGNLGLI. Over 47–54 the chain is Cytoplasmic; it reads VIIRVDSR. Residues 55 to 75 traverse the membrane as a helical segment; that stretch reads LHTPMYFFLSHLAFVDLCYSS. At 76-99 the chain is on the extracellular side; the sequence is AITPKMMVNFVVERNTIPFHACAT. A disulfide bond links C97 and C189. The chain crosses the membrane as a helical span at residues 100-120; sequence QLGCFLTFMITECFLLASMAY. The Cytoplasmic portion of the chain corresponds to 121-133; the sequence is DRYVAICSPLHYS. Residues 134–154 traverse the membrane as a helical segment; the sequence is TLMSKRVCIQLVAVPYVYSFL. At 155-196 the chain is on the extracellular side; it reads VALFHTIITFRLTYCGPNVINHFYCDDLPLLALSCSDTHMKE. The chain crosses the membrane as a helical span at residues 197–217; it reads ILIFAFAGFDMICSSSIVLTS. Residues 218–237 are Cytoplasmic-facing; sequence YLFIIAAILRIRSTQGRRKA. A helical membrane pass occupies residues 238–258; sequence ISTCGSHMVAVTIFYGTLIFM. Residues 259–271 lie on the Extracellular side of the membrane; that stretch reads YLQPKSNHSLDTD. A glycan (N-linked (GlcNAc...) asparagine) is linked at N265. A helical membrane pass occupies residues 272–292; that stretch reads KMASVFYTVVIPMLNPLIYSL. At 293 to 319 the chain is on the cytoplasmic side; it reads RNKEVKDASKKALDKGYETLKILRLSK.

This sequence belongs to the G-protein coupled receptor 1 family.

The protein resides in the cell membrane. In terms of biological role, potential odorant receptor. The protein is Olfactory receptor 8U3 of Mus musculus (Mouse).